A 279-amino-acid chain; its full sequence is NADPH-dependent 7-cyano-7-deazaguanine reductase (279 aa).

A substrate-binding site is contributed by Ile-86 to Ser-88. Ser-88–Lys-89 contributes to the NADPH binding site. The active-site Thioimide intermediate is Cys-187. Asp-194 serves as the catalytic Proton donor. His-226–Glu-227 contributes to the substrate binding site. Arg-255–Gly-256 contacts NADPH.

This sequence belongs to the GTP cyclohydrolase I family. QueF type 2 subfamily. Homodimer.

The protein resides in the cytoplasm. The enzyme catalyses 7-aminomethyl-7-carbaguanine + 2 NADP(+) = 7-cyano-7-deazaguanine + 2 NADPH + 3 H(+). The protein operates within tRNA modification; tRNA-queuosine biosynthesis. Catalyzes the NADPH-dependent reduction of 7-cyano-7-deazaguanine (preQ0) to 7-aminomethyl-7-deazaguanine (preQ1). The polypeptide is NADPH-dependent 7-cyano-7-deazaguanine reductase (Haemophilus ducreyi (strain 35000HP / ATCC 700724)).